We begin with the raw amino-acid sequence, 511 residues long: Endoglucanase B (511 aa).

Residues 1 to 29 form the signal peptide; the sequence is MNLLSGWVRPLMLGCGLLGAALSAGSIQA. In terms of domain architecture, CBM2 spans 30 to 130; it reads AVCEYRVTNE…AVTGAICGGQ (101 aa). An intrachain disulfide couples C32 to C127. Residues 137-173 form a disordered region; the sequence is SVASSSSSSSVVSSTPRSSSSSVSSSVPGTSSSSSSS. The CBM10 domain maps to 180–209; that stretch reads ACNWYGTLTPLCNNTSNGWGYEDGRSCVAR. 2 disulfide bridges follow: C181–C212 and C191–C206. The Nucleophile role is filled by D276. D393 functions as the Proton donor in the catalytic mechanism.

The protein belongs to the glycosyl hydrolase 45 (cellulase K) family.

It localises to the periplasm. The catalysed reaction is Endohydrolysis of (1-&gt;4)-beta-D-glucosidic linkages in cellulose, lichenin and cereal beta-D-glucans.. This enzyme catalyzes the endohydrolysis of 1,4-beta-glucosidic linkages in cellulose, lichenin and cereal beta-D-glucans. EGB is most active against barley beta-glucan, but showed significant activity against amorphous and crystalline cellulose. The protein is Endoglucanase B (celB) of Cellvibrio japonicus (strain Ueda107) (Pseudomonas fluorescens subsp. cellulosa).